Here is a 455-residue protein sequence, read N- to C-terminus: Mycosin-4 (455 aa).

The first 25 residues, 1-25, serve as a signal peptide directing secretion; the sequence is MTTSRTLRLLVVSALATLSGLGTPV. Positions 74 to 384 constitute a Peptidase S8 domain; sequence SAQLADLDQV…NGTVDALAAV (311 aa). Active-site charge relay system residues include Asp-98, His-129, and Ser-329. The tract at residues 389–417 is disordered; the sequence is IPQAGTATSDPAPVAVPVPRRSTPGPSDR. Low complexity predominate over residues 394-412; the sequence is TATSDPAPVAVPVPRRSTP. The chain crosses the membrane as a helical span at residues 432–452; sequence LALMATLATASRRLRPGRNGI.

The protein belongs to the peptidase S8 family.

The protein resides in the cell membrane. This is Mycosin-4 from Mycobacterium tuberculosis (strain ATCC 25618 / H37Rv).